The following is a 332-amino-acid chain: MKVTFEQLKAAFNRVLISRGVDNETADACAEMFARTTESGVYSHGVNRFPRFIQQLENGDIIPDAQPKRITSLGAIEQWDAQRSIGNLTAKKMMDRAIELAADHGIGLVALRNANHWMRGGSYGWQAAEKGYIGICWTNSIAVMPPWGAKECRIGTNPLIVAIPSTPITMVDMSMSMFSYGMLEVNRLAGRQLPVDGGFDDEGNLTKEPGVIEKNRRILPMGYWKGSGMSIVLDMIATLLSDGASVAEVTEDNSDEYGISQIFIAIEVDKLIDGPTRDAKLQRIMDYVTSAERADENQAIRLPGHEFTTLLAENRRNGITVDDSVWAKIQAL.

The active-site Proton donor is the histidine 44. Residues 168-174, 224-225, and 304-306 each bind NAD(+); these read ITMVDMS, WK, and GHE.

The protein belongs to the LDH2/MDH2 oxidoreductase family. DlgD subfamily. In terms of assembly, homodimer.

It is found in the cytoplasm. The enzyme catalyses 3-dehydro-L-gulonate + NAD(+) = 2,3-dioxo-L-gulonate + NADH + H(+). It catalyses the reaction 3-dehydro-L-gulonate + NADP(+) = 2,3-dioxo-L-gulonate + NADPH + H(+). Functionally, catalyzes the reduction of 2,3-diketo-L-gulonate in the presence of NADH, to form 3-keto-L-gulonate. The protein is 2,3-diketo-L-gulonate reductase of Escherichia coli O1:K1 / APEC.